Consider the following 205-residue polypeptide: G-protein coupled receptor (205 aa).

5 helical membrane passes run 40–60 (GITL…MILY), 71–91 (FYVI…FFMT), 107–127 (LVYF…AIIA), 151–171 (IGIL…FVQI), and 185–205 (LSSP…SFIW). The cysteines at positions 105 and 181 are disulfide-linked.

It belongs to the G-protein coupled receptor 1 family.

It is found in the host membrane. In Human herpesvirus 6B (strain Z29) (HHV-6 variant B), this protein is G-protein coupled receptor (U12).